Consider the following 272-residue polypeptide: Glycerol-3-phosphate acyltransferase (272 aa).

Transmembrane regions (helical) follow at residues 9 to 29 (IIILFLFIGYFIGNILFGILI), 60 to 80 (AIVMVLDFFKSWFSTFVCLLI), 99 to 119 (VIIYLGGFAAIIGHCFPCFYF), 149 to 169 (ASISPWMFFICFVLFWSICLI), 173 to 193 (VSLASIVTVFLLPIWSLIPHL), and 226 to 246 (LNWWYILVTFLLELLTAVLVI).

Belongs to the PlsY family. Probably interacts with PlsX.

It localises to the cell membrane. The catalysed reaction is an acyl phosphate + sn-glycerol 3-phosphate = a 1-acyl-sn-glycero-3-phosphate + phosphate. It functions in the pathway lipid metabolism; phospholipid metabolism. Functionally, catalyzes the transfer of an acyl group from acyl-phosphate (acyl-PO(4)) to glycerol-3-phosphate (G3P) to form lysophosphatidic acid (LPA). This enzyme utilizes acyl-phosphate as fatty acyl donor, but not acyl-CoA or acyl-ACP. The polypeptide is Glycerol-3-phosphate acyltransferase (Malacoplasma penetrans (strain HF-2) (Mycoplasma penetrans)).